We begin with the raw amino-acid sequence, 718 residues long: F-box/LRR-repeat protein 18 (718 aa).

In terms of domain architecture, F-box spans 25 to 72; it reads GVHLLGFSDEILLHILSHVPSTDLILNVRRTCRKLAALCLDKSLIHTV. 12 LRR repeats span residues 77–103, 104–128, 129–153, 177–201, 324–352, 367–392, 393–422, 468–492, 516–540, 542–567, 572–597, and 599–623; these read DYQA…SMAG, CYWL…NLSG, CHLT…AIDV, KQTL…LLYF, CTLS…NLSG, EDDI…NLSA, AHHH…SLPV, CPQP…ELIG, AQSV…TLAQ, PSVL…SLAN, GKVV…RLEQ, and YFSA…CLVS.

Directly interacts with SKP1 and CUL1.

Its function is as follows. Substrate-recognition component of the SCF (SKP1-CUL1-F-box protein)-type E3 ubiquitin ligase complex. The protein is F-box/LRR-repeat protein 18 (FBXL18) of Homo sapiens (Human).